Consider the following 913-residue polypeptide: MQEDLIIQKNLFAIGNDNNKQKEKTKIPEDLSLEDLKKESQKRPRQRKNSTNLINKFKTDLISNKKNVCINEESYSYKTVSKLKLTPVMKHYVTLKEENKDRLLLYRLGDFFECFFEDAVLISNLLEITLTSKDAGKEIGKIPMAGVPHHAMDRYCADLIKKNYSVVICDQLEKSSGNYGTPIKRGITRIITPGTVIEEGMLIAKKNNWITAIYLSEENSNESYEWGISKADVSTGELITLEGQSLSKLFDEIIKLDSSEIIVGSNAVRNLLIKGNSQITYTVSQETNFGINEANYLIKNYFQIANLEGIGLKNLKNATRSLGGLLNYLEKINPSNLDKDSSVKISLDFPQIQYGHNKLIIDYQTQKNLEIKNTQRENNYVGSLLWSIDRTYTCMGARCLRRWIDSPLLNVNEIYKRQNIITNFFESKKLRTDTQNLLRAMGDLERLAGRACAGHASPRDLIAIAEGLKKLPRLKSIIELFKYDLPNWTDQLINIDEGLLELADTISFKLVENPPLSISEGGMIHDGVDNILDGLRNLMDDYSEWLNKEELKERKISKISNLKIQFHKNFGYYISINKSKVNLAPQHWIKRQTLTNEERYITSEIKNKENKIFQIKSRASSKEYEIFCELRNIVAEKTKQIRSIAKSIASLDALLGLSITSIENNFIKPLLIPINDSMTKNSTKIIAGRNPIVEQLLSDKKFVANDISFEDNQKLIILTGPNASGKSCFIRQLGLIQILAQIGSFVPANNAEIKIADRIFTRIGAVDDQSSGQSTFMVEMSETASILNQATSNSLVLLDEIGRGTSTFDGLSIAWSVSEYLAKKIQCNTIFATHYHELNYLKNSNKNIQNFQVLVEQNDDQLIFSHRIVRGGSNKSYGIEAAKLAGVPKEVIEKAKSVLNSLEENNKLNHNIK.

The disordered stretch occupies residues N18–S50. The segment covering N19 to K42 has biased composition (basic and acidic residues). G720–S727 contributes to the ATP binding site.

This sequence belongs to the DNA mismatch repair MutS family.

Functionally, this protein is involved in the repair of mismatches in DNA. It is possible that it carries out the mismatch recognition step. This protein has a weak ATPase activity. The chain is DNA mismatch repair protein MutS from Prochlorococcus marinus (strain MIT 9301).